The following is a 932-amino-acid chain: Phosphoenolpyruvate carboxylase (932 aa).

Residues histidine 164 and lysine 594 contribute to the active site.

It belongs to the PEPCase type 1 family. Mg(2+) serves as cofactor.

It catalyses the reaction oxaloacetate + phosphate = phosphoenolpyruvate + hydrogencarbonate. Functionally, forms oxaloacetate, a four-carbon dicarboxylic acid source for the tricarboxylic acid cycle. In Bradyrhizobium diazoefficiens (strain JCM 10833 / BCRC 13528 / IAM 13628 / NBRC 14792 / USDA 110), this protein is Phosphoenolpyruvate carboxylase.